The sequence spans 120 residues: Holo-[acyl-carrier-protein] synthase (120 aa).

The Mg(2+) site is built by Asp-8 and Glu-58.

The protein belongs to the P-Pant transferase superfamily. AcpS family. Mg(2+) serves as cofactor.

The protein localises to the cytoplasm. The enzyme catalyses apo-[ACP] + CoA = holo-[ACP] + adenosine 3',5'-bisphosphate + H(+). Functionally, transfers the 4'-phosphopantetheine moiety from coenzyme A to a Ser of acyl-carrier-protein. The chain is Holo-[acyl-carrier-protein] synthase from Streptococcus sanguinis (strain SK36).